A 116-amino-acid polypeptide reads, in one-letter code: Endocuticle structural glycoprotein SgAbd-4 (116 aa).

Gln1 is modified (pyrrolidone carboxylic acid). One can recognise a Chitin-binding type R&amp;R domain in the interval 20–92; that stretch reads DGSYQWNYET…PQGAHFPTPP (73 aa). 2 O-linked (HexNAc...) threonine glycosylation sites follow: Thr90 and Thr107. An O-linked (HexNAc...) serine glycan is attached at Ser110. Thr111 is a glycosylation site (O-linked (HexNAc...) threonine). Position 116 is a proline amide (Pro116).

In terms of biological role, component of the abdominal endocuticle. This chain is Endocuticle structural glycoprotein SgAbd-4, found in Schistocerca gregaria (Desert locust).